Here is a 268-residue protein sequence, read N- to C-terminus: MSSIELGKQAEYPEQYSPDCLEPIARSLSRSGLGLNASALPFTGLDVWTGYELSWLDLSGKPQVAIGYFEFDAKTDAIVESKSFKYYLNSFNQTRFESWAAVQTLMQQDLANASGGDVNVRLEPLSAVSPLETPAGQCIDDCPLEAAVYTPDAALLKVEQGEVSEQLFSHLLKSNCPVTGQPDWATVWVSYRGNKITPESLLAYVVSYRQHQDFHENCVEKIFTDIMAQCAPVELSVYARYTRRGGLDINPFRTNCGAALPGWRIVRQ.

Residue 79-81 (VES) participates in substrate binding. Residue 81–82 (SK) coordinates NADPH. Cysteine 176 functions as the Thioimide intermediate in the catalytic mechanism. The active-site Proton donor is the aspartate 183. 215–216 (HE) lines the substrate pocket. Residue 244–245 (RG) participates in NADPH binding.

This sequence belongs to the GTP cyclohydrolase I family. QueF type 2 subfamily. As to quaternary structure, homodimer.

It localises to the cytoplasm. It catalyses the reaction 7-aminomethyl-7-carbaguanine + 2 NADP(+) = 7-cyano-7-deazaguanine + 2 NADPH + 3 H(+). The protein operates within tRNA modification; tRNA-queuosine biosynthesis. Functionally, catalyzes the NADPH-dependent reduction of 7-cyano-7-deazaguanine (preQ0) to 7-aminomethyl-7-deazaguanine (preQ1). The polypeptide is NADPH-dependent 7-cyano-7-deazaguanine reductase (Saccharophagus degradans (strain 2-40 / ATCC 43961 / DSM 17024)).